A 346-amino-acid chain; its full sequence is Methylthioribose-1-phosphate isomerase (346 aa).

Residues Arg48–Ala50, Arg91, and Gln196 each bind substrate. The Proton donor role is filled by Asp237. Residue Asn247–Lys248 participates in substrate binding.

It belongs to the eIF-2B alpha/beta/delta subunits family. MtnA subfamily.

The enzyme catalyses 5-(methylsulfanyl)-alpha-D-ribose 1-phosphate = 5-(methylsulfanyl)-D-ribulose 1-phosphate. Its pathway is amino-acid biosynthesis; L-methionine biosynthesis via salvage pathway; L-methionine from S-methyl-5-thio-alpha-D-ribose 1-phosphate: step 1/6. Its function is as follows. Catalyzes the interconversion of methylthioribose-1-phosphate (MTR-1-P) into methylthioribulose-1-phosphate (MTRu-1-P). This is Methylthioribose-1-phosphate isomerase from Thermosipho africanus (strain TCF52B).